Consider the following 460-residue polypeptide: GTPase Der (460 aa).

2 consecutive EngA-type G domains span residues 21 to 187 (PRVV…FSVD) and 198 to 373 (VRLA…AQLN). GTP-binding positions include 27–34 (GRPNVGKS), 74–78 (DTSGF), 141–144 (NKTE), 204–211 (GKPNTGKS), 251–255 (DTAGI), and 316–319 (NKWD). The 84-residue stretch at 374 to 457 (TKVETSALNT…PVKLTIRKNC (84 aa)) folds into the KH-like domain.

Belongs to the TRAFAC class TrmE-Era-EngA-EngB-Septin-like GTPase superfamily. EngA (Der) GTPase family. Associates with the 50S ribosomal subunit.

GTPase that plays an essential role in the late steps of ribosome biogenesis. In Treponema pallidum subsp. pallidum (strain SS14), this protein is GTPase Der.